The primary structure comprises 196 residues: ATP-dependent Clp protease proteolytic subunit (196 aa).

The active-site Nucleophile is Ser96. His121 is a catalytic residue.

The protein belongs to the peptidase S14 family. As to quaternary structure, fourteen ClpP subunits assemble into 2 heptameric rings which stack back to back to give a disk-like structure with a central cavity, resembling the structure of eukaryotic proteasomes.

The protein localises to the cytoplasm. It catalyses the reaction Hydrolysis of proteins to small peptides in the presence of ATP and magnesium. alpha-casein is the usual test substrate. In the absence of ATP, only oligopeptides shorter than five residues are hydrolyzed (such as succinyl-Leu-Tyr-|-NHMec, and Leu-Tyr-Leu-|-Tyr-Trp, in which cleavage of the -Tyr-|-Leu- and -Tyr-|-Trp bonds also occurs).. Cleaves peptides in various proteins in a process that requires ATP hydrolysis. Has a chymotrypsin-like activity. Plays a major role in the degradation of misfolded proteins. This chain is ATP-dependent Clp protease proteolytic subunit, found in Streptococcus pyogenes serotype M3 (strain SSI-1).